Consider the following 427-residue polypeptide: 3-phosphoshikimate 1-carboxyvinyltransferase (427 aa).

Positions 22, 23, and 27 each coordinate 3-phosphoshikimate. Residue lysine 22 participates in phosphoenolpyruvate binding. Phosphoenolpyruvate-binding residues include glycine 96 and arginine 124. Positions 169, 170, 171, 197, 313, 336, and 340 each coordinate 3-phosphoshikimate. Position 171 (glutamine 171) interacts with phosphoenolpyruvate. The Proton acceptor role is filled by aspartate 313. Positions 344, 386, and 411 each coordinate phosphoenolpyruvate.

It belongs to the EPSP synthase family. Monomer.

It localises to the cytoplasm. It catalyses the reaction 3-phosphoshikimate + phosphoenolpyruvate = 5-O-(1-carboxyvinyl)-3-phosphoshikimate + phosphate. Its pathway is metabolic intermediate biosynthesis; chorismate biosynthesis; chorismate from D-erythrose 4-phosphate and phosphoenolpyruvate: step 6/7. Catalyzes the transfer of the enolpyruvyl moiety of phosphoenolpyruvate (PEP) to the 5-hydroxyl of shikimate-3-phosphate (S3P) to produce enolpyruvyl shikimate-3-phosphate and inorganic phosphate. This is 3-phosphoshikimate 1-carboxyvinyltransferase from Citrobacter koseri (strain ATCC BAA-895 / CDC 4225-83 / SGSC4696).